The sequence spans 513 residues: ATP synthase subunit alpha (513 aa).

169–176 (GDRQTGKT) is an ATP binding site.

It belongs to the ATPase alpha/beta chains family. F-type ATPases have 2 components, CF(1) - the catalytic core - and CF(0) - the membrane proton channel. CF(1) has five subunits: alpha(3), beta(3), gamma(1), delta(1), epsilon(1). CF(0) has three main subunits: a(1), b(2) and c(9-12). The alpha and beta chains form an alternating ring which encloses part of the gamma chain. CF(1) is attached to CF(0) by a central stalk formed by the gamma and epsilon chains, while a peripheral stalk is formed by the delta and b chains.

It is found in the cell inner membrane. The catalysed reaction is ATP + H2O + 4 H(+)(in) = ADP + phosphate + 5 H(+)(out). Produces ATP from ADP in the presence of a proton gradient across the membrane. The alpha chain is a regulatory subunit. The protein is ATP synthase subunit alpha of Cupriavidus pinatubonensis (strain JMP 134 / LMG 1197) (Cupriavidus necator (strain JMP 134)).